A 138-amino-acid chain; its full sequence is uncharacterized protein (138 aa).

S110 is subject to Phosphoserine.

It localises to the cytoplasm. The protein localises to the nucleus. This is an uncharacterized protein from Schizosaccharomyces pombe (strain 972 / ATCC 24843) (Fission yeast).